The sequence spans 458 residues: Bifunctional protein HldE (458 aa).

The interval 1-311 (MVNVLVVGDL…ENLKSKKSGF (311 aa)) is ribokinase. 189 to 192 (NKKE) is a binding site for ATP. Aspartate 257 is an active-site residue. The cytidylyltransferase stretch occupies residues 333–458 (FTNGCFDILH…TTNIINKIKG (126 aa)).

In the N-terminal section; belongs to the carbohydrate kinase PfkB family. This sequence in the C-terminal section; belongs to the cytidylyltransferase family. As to quaternary structure, homodimer.

It catalyses the reaction D-glycero-beta-D-manno-heptose 7-phosphate + ATP = D-glycero-beta-D-manno-heptose 1,7-bisphosphate + ADP + H(+). The catalysed reaction is D-glycero-beta-D-manno-heptose 1-phosphate + ATP + H(+) = ADP-D-glycero-beta-D-manno-heptose + diphosphate. It participates in nucleotide-sugar biosynthesis; ADP-L-glycero-beta-D-manno-heptose biosynthesis; ADP-L-glycero-beta-D-manno-heptose from D-glycero-beta-D-manno-heptose 7-phosphate: step 1/4. The protein operates within nucleotide-sugar biosynthesis; ADP-L-glycero-beta-D-manno-heptose biosynthesis; ADP-L-glycero-beta-D-manno-heptose from D-glycero-beta-D-manno-heptose 7-phosphate: step 3/4. Its function is as follows. Catalyzes the phosphorylation of D-glycero-D-manno-heptose 7-phosphate at the C-1 position to selectively form D-glycero-beta-D-manno-heptose-1,7-bisphosphate. Functionally, catalyzes the ADP transfer from ATP to D-glycero-beta-D-manno-heptose 1-phosphate, yielding ADP-D-glycero-beta-D-manno-heptose. The polypeptide is Bifunctional protein HldE (Campylobacter fetus subsp. fetus (strain 82-40)).